Reading from the N-terminus, the 266-residue chain is Pyridoxal phosphate phosphatase YigL (266 aa).

Catalysis depends on Asp8, which acts as the Nucleophile. A Mg(2+)-binding site is contributed by Asp8. Leu9 is a binding site for phosphate. Asp10 serves as a coordination point for Mg(2+). Residues 42–43 (TG) and Lys191 contribute to the phosphate site. Asp214 provides a ligand contact to Mg(2+). Asn217 contributes to the phosphate binding site.

Belongs to the HAD-like hydrolase superfamily. Cof family. Mg(2+) is required as a cofactor. It depends on Mn(2+) as a cofactor. The cofactor is Co(2+). Requires Zn(2+) as cofactor.

It carries out the reaction pyridoxal 5'-phosphate + H2O = pyridoxal + phosphate. The enzyme catalyses sugar phosphate + H2O = sugar + phosphate.. Catalyzes Strongly the dephosphorylation of pyridoxal-phosphate (PLP) and moderately the dephosphorylation of 2-deoxyglucose 6-phosphate (2bGLU6P) and beta-glucose 6-phosphate (bGlu6P). Also hydrolyzes both purines (GMP and IMP) and pyrimidines as secondary substrates. In Escherichia coli (strain K12), this protein is Pyridoxal phosphate phosphatase YigL (yigL).